A 313-amino-acid polypeptide reads, in one-letter code: Intelectin-1b (313 aa).

A signal peptide spans 1–19 (MTQLGFLLFIMIATRVCSA). A Fibrinogen C-terminal domain is found at 32–251 (SFFSSLPRSC…NNERAASALC (220 aa)). Residues cysteine 41 and cysteine 70 are joined by a disulfide bond. Histidine 86, glutamate 87, asparagine 89, glycine 92, glycine 97, aspartate 98, and aspartate 133 together coordinate Ca(2+). 3 disulfides stabilise this stretch: cysteine 94–cysteine 280, cysteine 199–cysteine 259, and cysteine 251–cysteine 265. An N-linked (GlcNAc...) asparagine glycan is attached at asparagine 163. Ca(2+) contacts are provided by asparagine 260, glutamate 262, glutamate 274, and aspartate 282. A carbohydrate-binding positions include 262 to 263 (EH) and glutamate 274. Serine 298 is lipidated: GPI-anchor amidated serine. A propeptide spanning residues 299 to 313 (NSREITEAAVLLFYR) is cleaved from the precursor.

As to expression, expressed in the globlet and Paneth cells of the small intestine of infected mice. Expressed in the ileum of uninfected mice.

The protein resides in the cell membrane. It is found in the secreted. Functionally, may play a protective role in the innate immune response to parasite infection. The sequence is that of Intelectin-1b (Itln1b) from Mus musculus (Mouse).